Here is a 332-residue protein sequence, read N- to C-terminus: Anthranilate phosphoribosyltransferase (332 aa).

5-phospho-alpha-D-ribose 1-diphosphate is bound by residues Gly-80, 83–84, Thr-88, 90–93, 108–116, and Ser-120; these read GD, NLST, and KHGNRSASG. Gly-80 contacts anthranilate. Ser-92 contributes to the Mg(2+) binding site. Asn-111 serves as a coordination point for anthranilate. Arg-166 is a binding site for anthranilate. Asp-224 and Glu-225 together coordinate Mg(2+).

This sequence belongs to the anthranilate phosphoribosyltransferase family. In terms of assembly, homodimer. Mg(2+) is required as a cofactor.

It catalyses the reaction N-(5-phospho-beta-D-ribosyl)anthranilate + diphosphate = 5-phospho-alpha-D-ribose 1-diphosphate + anthranilate. It participates in amino-acid biosynthesis; L-tryptophan biosynthesis; L-tryptophan from chorismate: step 2/5. Its function is as follows. Catalyzes the transfer of the phosphoribosyl group of 5-phosphorylribose-1-pyrophosphate (PRPP) to anthranilate to yield N-(5'-phosphoribosyl)-anthranilate (PRA). The chain is Anthranilate phosphoribosyltransferase from Pyrobaculum calidifontis (strain DSM 21063 / JCM 11548 / VA1).